A 196-amino-acid polypeptide reads, in one-letter code: Probable nicotinate-nucleotide adenylyltransferase (196 aa).

This sequence belongs to the NadD family.

The enzyme catalyses nicotinate beta-D-ribonucleotide + ATP + H(+) = deamido-NAD(+) + diphosphate. The protein operates within cofactor biosynthesis; NAD(+) biosynthesis; deamido-NAD(+) from nicotinate D-ribonucleotide: step 1/1. Functionally, catalyzes the reversible adenylation of nicotinate mononucleotide (NaMN) to nicotinic acid adenine dinucleotide (NaAD). This is Probable nicotinate-nucleotide adenylyltransferase from Thermotoga petrophila (strain ATCC BAA-488 / DSM 13995 / JCM 10881 / RKU-1).